Consider the following 31-residue polypeptide: Aspartate aminotransferase, cytoplasmic (31 aa).

The protein belongs to the class-I pyridoxal-phosphate-dependent aminotransferase family. Homodimer. Pyridoxal 5'-phosphate is required as a cofactor.

Its subcellular location is the cytoplasm. It carries out the reaction L-aspartate + 2-oxoglutarate = oxaloacetate + L-glutamate. The enzyme catalyses L-cysteine + 2-oxoglutarate = 2-oxo-3-sulfanylpropanoate + L-glutamate. It catalyses the reaction (2S)-2-aminobutanoate + 2-oxoglutarate = 2-oxobutanoate + L-glutamate. The catalysed reaction is 3-sulfino-L-alanine + 2-oxoglutarate = 3-sulfinopyruvate + L-glutamate. Its function is as follows. Biosynthesis of L-glutamate from L-aspartate or L-cysteine. Important regulator of levels of glutamate, the major excitatory neurotransmitter of the vertebrate central nervous system. Acts as a scavenger of glutamate in brain neuroprotection. The aspartate aminotransferase activity is involved in hepatic glucose synthesis during development and in adipocyte glyceroneogenesis. Using L-cysteine as substrate, regulates levels of mercaptopyruvate, an important source of hydrogen sulfide. Mercaptopyruvate is converted into H(2)S via the action of 3-mercaptopyruvate sulfurtransferase (3MST). Hydrogen sulfide is an important synaptic modulator and neuroprotectant in the brain. This is Aspartate aminotransferase, cytoplasmic from Oryctolagus cuniculus (Rabbit).